The primary structure comprises 190 residues: Imidazole glycerol phosphate synthase subunit HisH (190 aa).

The region spanning 2–190 (IVGVVDYTVG…IKRFLAVAKR (189 aa)) is the Glutamine amidotransferase type-1 domain. C73 (nucleophile) is an active-site residue. Residues H169 and E171 contribute to the active site.

In terms of assembly, heterodimer of HisH and HisF.

The protein resides in the cytoplasm. The enzyme catalyses 5-[(5-phospho-1-deoxy-D-ribulos-1-ylimino)methylamino]-1-(5-phospho-beta-D-ribosyl)imidazole-4-carboxamide + L-glutamine = D-erythro-1-(imidazol-4-yl)glycerol 3-phosphate + 5-amino-1-(5-phospho-beta-D-ribosyl)imidazole-4-carboxamide + L-glutamate + H(+). The catalysed reaction is L-glutamine + H2O = L-glutamate + NH4(+). The protein operates within amino-acid biosynthesis; L-histidine biosynthesis; L-histidine from 5-phospho-alpha-D-ribose 1-diphosphate: step 5/9. IGPS catalyzes the conversion of PRFAR and glutamine to IGP, AICAR and glutamate. The HisH subunit catalyzes the hydrolysis of glutamine to glutamate and ammonia as part of the synthesis of IGP and AICAR. The resulting ammonia molecule is channeled to the active site of HisF. This chain is Imidazole glycerol phosphate synthase subunit HisH, found in Pyrobaculum aerophilum (strain ATCC 51768 / DSM 7523 / JCM 9630 / CIP 104966 / NBRC 100827 / IM2).